The chain runs to 446 residues: tRNA-2-methylthio-N(6)-dimethylallyladenosine synthase (446 aa).

Positions 3–120 constitute an MTTase N-terminal domain; the sequence is KKLFIETHGC…LPEMIDAARS (118 aa). Residues Cys12, Cys49, Cys83, Cys157, Cys161, and Cys164 each coordinate [4Fe-4S] cluster. The 233-residue stretch at 143–375 folds into the Radical SAM core domain; that stretch reads RVDGPTAFVS…QGRIHQQGYE (233 aa). Positions 378-442 constitute a TRAM domain; it reads RRMVGSTQRI…PHSLRGTLIE (65 aa).

This sequence belongs to the methylthiotransferase family. MiaB subfamily. In terms of assembly, monomer. [4Fe-4S] cluster serves as cofactor.

The protein resides in the cytoplasm. The catalysed reaction is N(6)-dimethylallyladenosine(37) in tRNA + (sulfur carrier)-SH + AH2 + 2 S-adenosyl-L-methionine = 2-methylsulfanyl-N(6)-dimethylallyladenosine(37) in tRNA + (sulfur carrier)-H + 5'-deoxyadenosine + L-methionine + A + S-adenosyl-L-homocysteine + 2 H(+). In terms of biological role, catalyzes the methylthiolation of N6-(dimethylallyl)adenosine (i(6)A), leading to the formation of 2-methylthio-N6-(dimethylallyl)adenosine (ms(2)i(6)A) at position 37 in tRNAs that read codons beginning with uridine. The protein is tRNA-2-methylthio-N(6)-dimethylallyladenosine synthase of Pseudomonas paraeruginosa (strain DSM 24068 / PA7) (Pseudomonas aeruginosa (strain PA7)).